Consider the following 259-residue polypeptide: Small ribosomal subunit protein eS1 (259 aa).

Residue A2 is modified to N-acetylalanine; partial.

The protein belongs to the eukaryotic ribosomal protein eS1 family. Component of the small ribosomal subunit. Mature ribosomes consist of a small (40S) and a large (60S) subunit. The 40S subunit contains about 33 different proteins and 1 molecule of RNA (18S). The 60S subunit contains about 49 different proteins and 3 molecules of RNA (25S, 5.8S and 5S).

The protein resides in the cytoplasm. The sequence is that of Small ribosomal subunit protein eS1 from Cryptococcus neoformans var. neoformans serotype D (strain B-3501A) (Filobasidiella neoformans).